Consider the following 126-residue polypeptide: Thiocyanate hydrolase subunit alpha (126 aa).

As to quaternary structure, heterododecamer consisting of 4 alpha, 4 beta, and 4 gamma subunits.

The enzyme catalyses thiocyanate + H2O + 2 H(+) = carbonyl sulfide + NH4(+). It functions in the pathway organosulfur degradation; thiocyanate degradation. Functionally, involved in the degradation of thiocyanate. The sequence is that of Thiocyanate hydrolase subunit alpha (scnA) from Thiobacillus thioparus.